Here is a 49-residue protein sequence, read N- to C-terminus: Light-harvesting protein B-880 alpha chain (49 aa).

At 1 to 12 (MYKLWLLFDPRR) the chain is on the cytoplasmic side. Residues 13–33 (TLVALSAFLFVLGLIIHFISL) form a helical membrane-spanning segment. An a bacteriochlorophyll-binding site is contributed by histidine 29. Over 34-49 (STDRFNWLEGKPAVRA) the chain is Periplasmic.

This sequence belongs to the antenna complex alpha subunit family. The core complex is formed by different alpha and beta chains, binding bacteriochlorophyll molecules, and arranged most probably in tetrameric structures disposed around the reaction center. The non-pigmented gamma chains may constitute additional components.

Its subcellular location is the cell inner membrane. Functionally, antenna complexes are light-harvesting systems, which transfer the excitation energy to the reaction centers. This Rhodoblastus acidophilus (Rhodopseudomonas acidophila) protein is Light-harvesting protein B-880 alpha chain.